Consider the following 457-residue polypeptide: Biphenyl dioxygenase subunit alpha (457 aa).

Residues 58-174 (WLMLGHETHI…VETYKGLVFA (117 aa)) form the Rieske domain. [2Fe-2S] cluster-binding residues include Cys-100, His-102, Cys-120, and His-123. 2 residues coordinate Fe cation: His-233 and His-239.

This sequence belongs to the bacterial ring-hydroxylating dioxygenase alpha subunit family. Heterohexamer consisting of three BphA subunits and three BphE subunits. A ferredoxin (BphF) and a ferredoxin reductase (BphG) must be present to obtain activity. Requires [2Fe-2S] cluster as cofactor. It depends on Fe cation as a cofactor.

The enzyme catalyses biphenyl + NADH + O2 + H(+) = (2R,3S)-3-phenylcyclohexa-3,5-diene-1,2-diol + NAD(+). Its pathway is xenobiotic degradation; biphenyl degradation; 2-hydroxy-2,4-pentadienoate and benzoate from biphenyl: step 1/4. The protein is Biphenyl dioxygenase subunit alpha (bphA) of Comamonas testosteroni (Pseudomonas testosteroni).